A 395-amino-acid polypeptide reads, in one-letter code: Elongation factor Tu (395 aa).

The tr-type G domain maps to 10-204 (KPHVNVGTIG…AVDEYIPEPV (195 aa)). Residues 19–26 (GHVDHGKT) form a G1 region. Residue 19–26 (GHVDHGKT) coordinates GTP. Residue Thr26 participates in Mg(2+) binding. Residues 60 to 64 (GITIA) are G2. The interval 81 to 84 (DCPG) is G3. Residues 81-85 (DCPGH) and 136-139 (NKVD) contribute to the GTP site. The tract at residues 136 to 139 (NKVD) is G4. Residues 174–176 (SAL) are G5.

This sequence belongs to the TRAFAC class translation factor GTPase superfamily. Classic translation factor GTPase family. EF-Tu/EF-1A subfamily. Monomer.

It is found in the cytoplasm. The enzyme catalyses GTP + H2O = GDP + phosphate + H(+). GTP hydrolase that promotes the GTP-dependent binding of aminoacyl-tRNA to the A-site of ribosomes during protein biosynthesis. The sequence is that of Elongation factor Tu from Exiguobacterium sp. (strain ATCC BAA-1283 / AT1b).